The primary structure comprises 515 residues: Protein DETOXIFICATION 32 (515 aa).

The segment covering 1–26 (METLNVDHEDTISSEQEHRAHTKSDT) has biased composition (basic and acidic residues). Residues 1–30 (METLNVDHEDTISSEQEHRAHTKSDTDMPP) are disordered. 12 consecutive transmembrane segments (helical) span residues 48-68 (LWWL…LGAV), 90-110 (VISG…ATLC), 131-151 (IILN…TPLL), 167-187 (FSLW…TAKF), 194-214 (VIAM…LSWL), 225-245 (GGAV…IVYI), 276-296 (AVMV…AGYL), 303-323 (VAAL…AFGF), 347-367 (LIVA…TLIV), 392-412 (LLAL…VAVG), 418-438 (IVAY…GLVL), and 448-468 (GIWT…LFII). Residues 488 to 497 (GDQSNKREEI) show a composition bias toward basic and acidic residues. The tract at residues 488–515 (GDQSNKREEIDLCEEDENNSNGENNHRK) is disordered. Low complexity predominate over residues 506–515 (NSNGENNHRK).

The protein belongs to the multi antimicrobial extrusion (MATE) (TC 2.A.66.1) family.

The protein localises to the membrane. This is Protein DETOXIFICATION 32 from Arabidopsis thaliana (Mouse-ear cress).